A 905-amino-acid chain; its full sequence is Respiratory burst oxidase homolog protein B (905 aa).

Disordered regions lie at residues 1-46 (MADL…KTAR) and 69-134 (EVRG…VRKR). Residues 1–355 (MADLEAGMVA…MYFLEENWKR (355 aa)) lie on the Cytoplasmic side of the membrane. Polar residues predominate over residues 29–44 (IPNSGNLGSSNRSTKT). The segment covering 75–84 (EGGSGHGTGF) has biased composition (gly residues). Residues 91–108 (SPSSKSGKLTSKLRQVTN) show a composition bias toward polar residues. EF-hand-like regions lie at residues 172-180 (QVDGVLLRS) and 206-217 (RGIVKQVLTKDE). EF-hand domains follow at residues 229 to 264 (GFDN…SASA) and 273 to 308 (RADE…SPSE). Residues D242, N244, D246, R248, and E253 each contribute to the Ca(2+) site. Residues 356–376 (SWVMTLWISICIALFIWKFIQ) traverse the membrane as a helical segment. The Extracellular segment spans residues 377-440 (YRNRAVFGIM…FNDNINFHKV (64 aa)). Positions 395–551 (GAAETLKFNM…HLFVIVYTLL (157 aa)) constitute a Ferric oxidoreductase domain. A helical membrane pass occupies residues 441–461 (IAAGVAVGVALHAGAHLTCDF). Over 462-496 (PRLLHASDAQYELMKPFFGEKRPPNYWWFVKGTEG) the chain is Cytoplasmic. The helical transmembrane segment at 497–517 (WTGVVMVVLMAIAFTLAQPWF) threads the bilayer. The Extracellular portion of the chain corresponds to 518-539 (RRNKLKDSNPLKKMTGFNAFWF). A helical transmembrane segment spans residues 540–560 (THHLFVIVYTLLFVHGTCLYL). Residues 561–568 (SRKWYKKT) are Cytoplasmic-facing. The chain crosses the membrane as a helical span at residues 569–586 (TWMYLAVPVVLYVSERIL). An FAD-binding FR-type domain is found at 587–715 (RLFRSHDAVG…DGPYGAPAQD (129 aa)). Over 587 to 717 (RLFRSHDAVG…PYGAPAQDYR (131 aa)) the chain is Extracellular. Residues 718-738 (EYDVLLLIGLGIGATPLISIV) form a helical membrane-spanning segment. The Cytoplasmic segment spans residues 739–905 (KDVLNHIQGE…TRFDFHKENF (167 aa)).

Belongs to the RBOH (TC 5.B.1.3) family. Monomer and homodimer, stabilized by swapping the EF-hand motifs. Interacts with GTP-bound RAC1.

The protein localises to the membrane. Calcium-dependent NADPH oxidase that generates superoxide. The polypeptide is Respiratory burst oxidase homolog protein B (RBOHB) (Oryza sativa subsp. japonica (Rice)).